Reading from the N-terminus, the 1274-residue chain is DENN domain-containing protein 5B (1274 aa).

N-acetylserine is present on Ser-2. A uDENN domain is found at 39–244 (DELAGENFDQ…EVPLPPPGRS (206 aa)). A phosphoserine mark is found at Ser-49 and Ser-178. The 137-residue stretch at 263 to 399 (ELPLSDYPLR…VDFIQELSEV (137 aa)) folds into the cDENN domain. The 181-residue stretch at 401–581 (VQFGIPPEGS…DNKIMSQWEE (181 aa)) folds into the dDENN domain. Residues 772 to 932 (LEENTLIASL…DYFCFTSVFT (161 aa)) enclose the RUN 1 domain. Ser-822 is subject to Phosphoserine. A helical membrane pass occupies residues 916–936 (LLSLNAVDYFCFTSVFTTIMI). The PLAT domain maps to 936 to 1044 (IPYRSVIIPI…DDGSLERILI (109 aa)). Thr-1062 is modified (phosphothreonine). 3 positions are modified to phosphoserine: Ser-1068, Ser-1076, and Ser-1079. Residues 1118-1267 (TVLLCGENGL…QDFTIVLEGS (150 aa)) enclose the RUN 2 domain.

It belongs to the RAB6IP1 family.

It is found in the membrane. Functionally, guanine nucleotide exchange factor (GEF) which may activate RAB39A and/or RAB39B. Promotes the exchange of GDP to GTP, converting inactive GDP-bound Rab proteins into their active GTP-bound form. The polypeptide is DENN domain-containing protein 5B (DENND5B) (Homo sapiens (Human)).